The sequence spans 254 residues: Aspartate/glutamate leucyltransferase (254 aa).

This sequence belongs to the R-transferase family. Bpt subfamily.

The protein localises to the cytoplasm. The enzyme catalyses N-terminal L-glutamyl-[protein] + L-leucyl-tRNA(Leu) = N-terminal L-leucyl-L-glutamyl-[protein] + tRNA(Leu) + H(+). It carries out the reaction N-terminal L-aspartyl-[protein] + L-leucyl-tRNA(Leu) = N-terminal L-leucyl-L-aspartyl-[protein] + tRNA(Leu) + H(+). Functions in the N-end rule pathway of protein degradation where it conjugates Leu from its aminoacyl-tRNA to the N-termini of proteins containing an N-terminal aspartate or glutamate. In Maricaulis maris (strain MCS10) (Caulobacter maris), this protein is Aspartate/glutamate leucyltransferase.